Consider the following 308-residue polypeptide: Ankyrin repeat and SOCS box protein 12 (308 aa).

ANK repeat units follow at residues 63–92 (IPGT…DVDS), 96–125 (KAQT…CPSG), 129–158 (NNCS…EANV), 171–200 (SCSG…DPDY), and 213–243 (QPRT…NIYL). The SOCS box domain occupies 268-308 (PRSLLSQTRLVIRRSLCRANQSQATDQLDIPPVLISYLKHQ).

This sequence belongs to the ankyrin SOCS box (ASB) family. Interacts with CUL5 and RNF7.

It participates in protein modification; protein ubiquitination. Functionally, probable substrate-recognition component of a SCF-like ECS (Elongin-Cullin-SOCS-box protein) E3 ubiquitin-protein ligase complex which mediates the ubiquitination and subsequent proteasomal degradation of target proteins. In Mus musculus (Mouse), this protein is Ankyrin repeat and SOCS box protein 12 (Asb12).